The primary structure comprises 344 residues: Ureide permease 3 (344 aa).

Over methionine 1–threonine 10 the chain is Extracellular. Residues isoleucine 11–threonine 31 form a helical membrane-spanning segment. Residues glutamate 32–tyrosine 42 are Cytoplasmic-facing. A helical transmembrane segment spans residues leucine 43–isoleucine 63. Topologically, residues serine 64 to asparagine 78 are extracellular. The helical transmembrane segment at tryptophan 79–threonine 99 threads the bilayer. Residues glutamine 100–tyrosine 101 lie on the Cytoplasmic side of the membrane. The chain crosses the membrane as a helical span at residues alanine 102–isoleucine 122. Residues glycine 123–arginine 136 lie on the Extracellular side of the membrane. Residues alanine 137–valine 157 form a helical membrane-spanning segment. Over histidine 158 to arginine 208 the chain is Cytoplasmic. Alanine 209–serine 216 contributes to the ATP binding site. The helical transmembrane segment at alanine 209–proline 229 threads the bilayer. Residues lysine 230 to threonine 235 lie on the Extracellular side of the membrane. The chain crosses the membrane as a helical span at residues alanine 236 to leucine 256. At tyrosine 257 to arginine 278 the chain is on the cytoplasmic side. A helical transmembrane segment spans residues glycine 279 to glycine 299. Over glutamine 300–serine 344 the chain is Extracellular.

This sequence belongs to the plant ureide permease (TC 2.A.7.19) family.

Its subcellular location is the membrane. In terms of biological role, proton-coupled transporter that transports a wide spectrum of oxo derivatives of heterocyclic nitrogen compounds. This Arabidopsis thaliana (Mouse-ear cress) protein is Ureide permease 3.